The sequence spans 1068 residues: Phosphatidylinositol 4,5-bisphosphate 3-kinase catalytic subunit alpha isoform (1068 aa).

In terms of domain architecture, PI3K-ABD spans 16 to 105 (MPPRILVECL…QPFLKVIEPV (90 aa)). The PI3K-RBD domain maps to 187–289 (KGQIIVVIWV…GRMPNLMLMA (103 aa)). The C2 PI3K-type domain occupies 330–487 (INSALRIKIL…DWFSSVVKFP (158 aa)). The 178-residue stretch at 517–694 (LARDNELREN…GLLLESYCRA (178 aa)) folds into the PIK helical domain. One can recognise a PI3K/PI4K catalytic domain in the interval 765-1051 (RLEECRIMSS…QMNDAHHGGW (287 aa)). Residues 771-777 (IMSSAKR) form a G-loop region. The catalytic loop stretch occupies residues 912 to 920 (GIGDRHNSN). The activation loop stretch occupies residues 931–957 (HIDFGHFLDHKKKKFGYKRERVPFVLT).

The protein belongs to the PI3/PI4-kinase family. In terms of assembly, heterodimer of a catalytic subunit PIK3CA and a p85 regulatory subunit (PIK3R1, PIK3R2 or PIK3R3). Interacts with IRS1 in nuclear extracts. Interacts with RUFY3. Interacts with RASD2. Interacts with APPL1. Interacts with HRAS and KRAS. Interaction with HRAS/KRAS is required for PI3K pathway signaling and cell proliferation stimulated by EGF and FGF2. Interacts with FAM83B; activates the PI3K/AKT signaling cascade.

It catalyses the reaction a 1,2-diacyl-sn-glycero-3-phospho-(1D-myo-inositol-4,5-bisphosphate) + ATP = a 1,2-diacyl-sn-glycero-3-phospho-(1D-myo-inositol-3,4,5-trisphosphate) + ADP + H(+). The catalysed reaction is a 1,2-diacyl-sn-glycero-3-phospho-(1D-myo-inositol) + ATP = a 1,2-diacyl-sn-glycero-3-phospho-(1D-myo-inositol-3-phosphate) + ADP + H(+). It carries out the reaction L-seryl-[protein] + ATP = O-phospho-L-seryl-[protein] + ADP + H(+). The enzyme catalyses 1,2-dioctanoyl-sn-glycero-3-phospho-(1D-myo-inositol-4,5-bisphosphate) + ATP = 1,2-dioctanoyl-sn-glycero-3-phospho-(1D-myo-inositol-3,4,5-trisphosphate) + ADP + H(+). It catalyses the reaction 1-octadecanoyl-2-(5Z,8Z,11Z,14Z)-eicosatetraenoyl-sn-glycero-3-phospho-1D-myo-inositol 4,5-bisphosphate + ATP = 1-octadecanoyl-2-(5Z,8Z,11Z,14Z-eicosatetraenoyl)-sn-glycero-3-phospho-(1D-myo-inositol 3,4,5-triphosphate) + ADP + H(+). The protein operates within phospholipid metabolism; phosphatidylinositol phosphate biosynthesis. Its function is as follows. Phosphoinositide-3-kinase (PI3K) phosphorylates phosphatidylinositol (PI) and its phosphorylated derivatives at position 3 of the inositol ring to produce 3-phosphoinositides. Uses ATP and PtdIns(4,5)P2 (phosphatidylinositol 4,5-bisphosphate) to generate phosphatidylinositol 3,4,5-trisphosphate (PIP3). PIP3 plays a key role by recruiting PH domain-containing proteins to the membrane, including AKT1 and PDPK1, activating signaling cascades involved in cell growth, survival, proliferation, motility and morphology. Participates in cellular signaling in response to various growth factors. Involved in the activation of AKT1 upon stimulation by receptor tyrosine kinases ligands such as EGF, insulin, IGF1, VEGFA and PDGF. Involved in signaling via insulin-receptor substrate (IRS) proteins. Essential in endothelial cell migration during vascular development through VEGFA signaling, possibly by regulating RhoA activity. Required for lymphatic vasculature development, possibly by binding to RAS and by activation by EGF and FGF2, but not by PDGF. Regulates invadopodia formation through the PDPK1-AKT1 pathway. Participates in cardiomyogenesis in embryonic stem cells through a AKT1 pathway. Participates in vasculogenesis in embryonic stem cells through PDK1 and protein kinase C pathway. Also has serine-protein kinase activity: phosphorylates PIK3R1 (p85alpha regulatory subunit), EIF4EBP1 and HRAS. Plays a role in the positive regulation of phagocytosis and pinocytosis. This Mus musculus (Mouse) protein is Phosphatidylinositol 4,5-bisphosphate 3-kinase catalytic subunit alpha isoform (Pik3ca).